We begin with the raw amino-acid sequence, 474 residues long: MSDIVSSSTDYSRRSPSSSSIGTNETDHTGFHEKRQGASSESLIPPAQRSSEESMPAPKLFPKLTSKPNPQLNLKDTLNKRVSDRLQALELNKSFDFSGTPRPMHPISHPLSQHKTPEFKHRKRNVESILTPKNPSLFSSSNAASQRGSLNTAPSNFAYSHSSSLQTSASSRPPVLSNGSFPRQTNTAPLNPPVHLKDNIRNSATPSTSQADIPTQYPINSTQKQQAKYEAEIEGYKAKLAGTYHEISVLQNTIVNVSGQLIAVNDQLQQLRSGKASTSPSTKDTNMRLVEGHNEETLALQRGKYTQEEVDKLIQERMEKVAEDLHAQYSAKHTQKINAFKANYARKYEATIQELQNQIGTAPNAPKISNSNWEEERRALKADNQTLQKQLEKAIQERQDMSDFLNNFKADMAKSDKLLMQQQSQQTGDLETLRLQLQALQEELRVEREERQQLIQMSEDLVIAMDQLNLEQKS.

A compositionally biased stretch (low complexity) spans 1-20 (MSDIVSSSTDYSRRSPSSSS). Disordered regions lie at residues 1 to 79 (MSDI…DTLN), 93 to 114 (KSFD…LSQH), and 164 to 223 (SLQT…NSTQ). At serine 17 the chain carries Phosphoserine. Residues 25–36 (ETDHTGFHEKRQ) are compositionally biased toward basic and acidic residues. Polar residues predominate over residues 66–76 (SKPNPQLNLKD). 2 stretches are compositionally biased toward polar residues: residues 177-189 (SNGS…NTAP) and 201-223 (RNSA…NSTQ). Coiled coils occupy residues 219–273 (INST…QLRS) and 367–471 (KISN…LNLE).

As to quaternary structure, interacts with alp14.

The protein localises to the nucleus. The protein resides in the cytoplasm. It is found in the cytoskeleton. Its subcellular location is the spindle. It localises to the chromosome. The protein localises to the centromere. The protein resides in the kinetochore. In terms of biological role, required for bipolar spindle formation and proper chromosome segregation. Has an indirect role in connecting the kinetochores and the plus end of pole to chromosome microtubules by targeting alp14 to the spindle pole body. Involved in the emergence of large microtubule organizing centers (MTOC) in interphase cells. Attaches to the minus ends of microtubules and associates with the sites of microtubule attachment on the nuclear envelope. This leads to the stabilization of the microtubule bundles. The polypeptide is Microtubule protein alp7 (alp7) (Schizosaccharomyces pombe (strain 972 / ATCC 24843) (Fission yeast)).